A 697-amino-acid chain; its full sequence is Elongation factor G (697 aa).

Residues 10–290 enclose the tr-type G domain; sequence THFRNIGIAA…AVVDYLPSPL (281 aa). GTP contacts are provided by residues 19–26, 89–93, and 143–146; these read AHIDAGKT, DTPGH, and NKMD.

The protein belongs to the TRAFAC class translation factor GTPase superfamily. Classic translation factor GTPase family. EF-G/EF-2 subfamily.

The protein localises to the cytoplasm. Functionally, catalyzes the GTP-dependent ribosomal translocation step during translation elongation. During this step, the ribosome changes from the pre-translocational (PRE) to the post-translocational (POST) state as the newly formed A-site-bound peptidyl-tRNA and P-site-bound deacylated tRNA move to the P and E sites, respectively. Catalyzes the coordinated movement of the two tRNA molecules, the mRNA and conformational changes in the ribosome. The polypeptide is Elongation factor G (Deinococcus deserti (strain DSM 17065 / CIP 109153 / LMG 22923 / VCD115)).